A 219-amino-acid polypeptide reads, in one-letter code: Glutamine transport system permease protein GlnP (219 aa).

Residues M1–T22 are Periplasmic-facing. Residues A19 to L209 form the ABC transmembrane type-1 domain. Residues L23–A43 form a helical membrane-spanning segment. The Cytoplasmic portion of the chain corresponds to R44–H53. A helical membrane pass occupies residues V54 to I74. Topologically, residues Y75–D88 are periplasmic. Residues P89 to T109 traverse the membrane as a helical segment. Residues R110–P150 lie on the Cytoplasmic side of the membrane. A helical transmembrane segment spans residues L151 to A171. Topologically, residues E172–A187 are periplasmic. A helical membrane pass occupies residues L188 to I208. At L209–L219 the chain is on the cytoplasmic side.

The protein belongs to the binding-protein-dependent transport system permease family. HisMQ subfamily.

The protein localises to the cell inner membrane. In terms of biological role, part of the binding-protein-dependent transport system for glutamine; probably responsible for the translocation of the substrate across the membrane. The polypeptide is Glutamine transport system permease protein GlnP (glnP) (Escherichia coli O6:H1 (strain CFT073 / ATCC 700928 / UPEC)).